We begin with the raw amino-acid sequence, 478 residues long: Aspartyl/glutamyl-tRNA(Asn/Gln) amidotransferase subunit B (478 aa).

Belongs to the GatB/GatE family. GatB subfamily. In terms of assembly, heterotrimer of A, B and C subunits.

It catalyses the reaction L-glutamyl-tRNA(Gln) + L-glutamine + ATP + H2O = L-glutaminyl-tRNA(Gln) + L-glutamate + ADP + phosphate + H(+). The enzyme catalyses L-aspartyl-tRNA(Asn) + L-glutamine + ATP + H2O = L-asparaginyl-tRNA(Asn) + L-glutamate + ADP + phosphate + 2 H(+). Its function is as follows. Allows the formation of correctly charged Asn-tRNA(Asn) or Gln-tRNA(Gln) through the transamidation of misacylated Asp-tRNA(Asn) or Glu-tRNA(Gln) in organisms which lack either or both of asparaginyl-tRNA or glutaminyl-tRNA synthetases. The reaction takes place in the presence of glutamine and ATP through an activated phospho-Asp-tRNA(Asn) or phospho-Glu-tRNA(Gln). The protein is Aspartyl/glutamyl-tRNA(Asn/Gln) amidotransferase subunit B of Dichelobacter nodosus (strain VCS1703A).